The following is a 262-amino-acid chain: 5'-nucleotidase SurE (262 aa).

The a divalent metal cation site is built by D11, D12, S43, and N101.

The protein belongs to the SurE nucleotidase family. A divalent metal cation is required as a cofactor.

Its subcellular location is the cytoplasm. It catalyses the reaction a ribonucleoside 5'-phosphate + H2O = a ribonucleoside + phosphate. Its function is as follows. Nucleotidase that shows phosphatase activity on nucleoside 5'-monophosphates. The protein is 5'-nucleotidase SurE of Prochlorococcus marinus (strain NATL1A).